A 457-amino-acid polypeptide reads, in one-letter code: Proton-translocating ferredoxin:NAD(+) oxidoreductase complex subunit C (457 aa).

4Fe-4S ferredoxin-type domains are found at residues 353–386 (TKND…MLSI) and 396–427 (AKEE…YIRY). [4Fe-4S] cluster is bound by residues C365, C368, C371, C375, C405, C408, C411, and C415. Residues 433–457 (RAAGEREKAKAAKAKEKKEKEEVLK) are disordered.

Belongs to the 4Fe4S bacterial-type ferredoxin family. RnfC subfamily. In terms of assembly, the complex is composed of six subunits: RnfA, RnfB, RnfC, RnfD, RnfE and RnfG. The cofactor is [4Fe-4S] cluster.

It localises to the cell membrane. Functionally, part of a membrane-bound complex that couples electron transfer with translocation of ions across the membrane. Couples electron transfer from reduced ferredoxin to NAD(+) with translocation of H(+) out of the cell. Essential for energy conservation during autotrophic growth. Contributes to ATP synthesis during heterotrophic growth. This is Proton-translocating ferredoxin:NAD(+) oxidoreductase complex subunit C from Clostridium ljungdahlii (strain ATCC 55383 / DSM 13528 / PETC).